The primary structure comprises 97 residues: Large ribosomal subunit protein bL28 (97 aa).

This sequence belongs to the bacterial ribosomal protein bL28 family.

The protein is Large ribosomal subunit protein bL28 of Sphingopyxis alaskensis (strain DSM 13593 / LMG 18877 / RB2256) (Sphingomonas alaskensis).